Consider the following 604-residue polypeptide: UvrABC system protein C (604 aa).

The GIY-YIG domain occupies 10-89 (ELPGVYLMKD…VKKNRPHYNI (80 aa)). One can recognise a UVR domain in the interval 199 to 234 (SGTIKELQEKMNIHAIAQEYESAAVIRDQIDALKSL).

The protein belongs to the UvrC family. In terms of assembly, interacts with UvrB in an incision complex.

The protein resides in the cytoplasm. Its function is as follows. The UvrABC repair system catalyzes the recognition and processing of DNA lesions. UvrC both incises the 5' and 3' sides of the lesion. The N-terminal half is responsible for the 3' incision and the C-terminal half is responsible for the 5' incision. This Methanococcoides burtonii (strain DSM 6242 / NBRC 107633 / OCM 468 / ACE-M) protein is UvrABC system protein C.